A 242-amino-acid chain; its full sequence is MRKIIIAGNWKMHKTQAEAQAFLQGFKPLIEDAAESREVVLCVPFTDLSGMSQQLHGGRVRLGAQNVHWEASGAYTGEISAAMLTEIGIHYVVIGHSERRQYFGETDETANLRVLAAQKAGLIPILCVGESKAQRDAGETEQVIVDQVKKGLVNVDQSNLVIAYEPIWAIGTGDTCAATEANRVIGLIREQLTNSQVTIQYGGSVNANNVDEIMAQPEIDGALVGGASLEPQSFARIVNFQP.

9-11 (NWK) provides a ligand contact to substrate. The Electrophile role is filled by H96. E165 serves as the catalytic Proton acceptor. Substrate is bound by residues G171, S204, and 225 to 226 (GG).

The protein belongs to the triosephosphate isomerase family. Homodimer.

The protein localises to the cytoplasm. The enzyme catalyses D-glyceraldehyde 3-phosphate = dihydroxyacetone phosphate. It functions in the pathway carbohydrate biosynthesis; gluconeogenesis. It participates in carbohydrate degradation; glycolysis; D-glyceraldehyde 3-phosphate from glycerone phosphate: step 1/1. Involved in the gluconeogenesis. Catalyzes stereospecifically the conversion of dihydroxyacetone phosphate (DHAP) to D-glyceraldehyde-3-phosphate (G3P). The chain is Triosephosphate isomerase from Synechocystis sp. (strain ATCC 27184 / PCC 6803 / Kazusa).